The following is a 252-amino-acid chain: Receptor expression-enhancing protein 2 (252 aa).

The next 2 helical transmembrane spans lie at 1-21 (MVSW…YPAY) and 35-55 (YVKW…ETLT). Residue Ser150 is modified to Phosphoserine. Residues 165-252 (LQRPDGRLRP…KKTSGGGDSA (88 aa)) form a disordered region. A compositionally biased stretch (basic and acidic residues) spans 203 to 217 (SRTEASEDDMGDKAP).

The protein belongs to the DP1 family. In terms of assembly, interacts with odorant receptor proteins. Detected in brain, heart and skeletal muscle, and at low levels in placenta, kidney and pancreas. Expressed in circumvallate papillae.

Its subcellular location is the membrane. Functionally, required for endoplasmic reticulum (ER) network formation, shaping and remodeling. May enhance the cell surface expression of odorant receptors. This chain is Receptor expression-enhancing protein 2 (REEP2), found in Homo sapiens (Human).